The chain runs to 74 residues: Consomatin Ma1 (74 aa).

The signal sequence occupies residues Met-1–Gly-22. Residues Gly-23–Ser-57 constitute a propeptide that is removed on maturation. Cys-63 and Cys-68 are oxidised to a cystine. Trp-65 is subject to D-tryptophan. 3 positions are modified to 4-hydroxyproline: Pro-69, Pro-70, and Pro-72.

This sequence belongs to the conotoxin C superfamily. Consomatin family. As to expression, expressed by the venom duct.

The protein resides in the secreted. Moderately activates human somatostatin receptors (SSTR) with a preferential activation of SSTR1 and SSTR4. In vivo, does not cause behavioral changes in mice within a few minutes of intracranial injection, but causes a progressive loss of movement thereafter. Four to five hours after injection, mice recover, even with the highest dose tested. Shows antinociception and antihyperalgesia activities in two mouse models of acute pain, most probably by acting outside the central nervous system. The polypeptide is Consomatin Ma1 (Conus magus (Magical cone)).